The sequence spans 670 residues: FAD-binding monooxygenase ausC (670 aa).

Residues 144–147 (TWYW), 156–157 (DT), and Tyr-162 contribute to the FAD site. NADP(+) is bound at residue 154 to 156 (MCD). NADP(+) is bound by residues 299 to 305 (TGASAVQ) and 322 to 323 (RT).

It belongs to the FAD-binding monooxygenase family. FAD is required as a cofactor.

It catalyses the reaction preaustinoid A + AH2 + O2 = preaustinoid A1 + A + H2O. It functions in the pathway secondary metabolite biosynthesis; terpenoid biosynthesis. In terms of biological role, FAD-binding monooxygenase; part of the gene cluster that mediates the biosynthesis of calidodehydroaustin, a fungal meroterpenoid. The first step of the pathway is the synthesis of 3,5-dimethylorsellinic acid by the polyketide synthase ausA. 3,5-dimethylorsellinic acid is then prenylated by the polyprenyl transferase ausN. Further epoxidation by the FAD-dependent monooxygenase ausM and cyclization by the probable terpene cyclase ausL lead to the formation of protoaustinoid A. Protoaustinoid A is then oxidized to spiro-lactone preaustinoid A3 by the combined action of the FAD-binding monooxygenases ausB and ausC, and the dioxygenase ausE. Acid-catalyzed keto-rearrangement and ring contraction of the tetraketide portion of preaustinoid A3 by ausJ lead to the formation of preaustinoid A4. The aldo-keto reductase ausK, with the help of ausH, is involved in the next step by transforming preaustinoid A4 into isoaustinone which is in turn hydroxylated by the P450 monooxygenase ausI to form austinolide. The cytochrome P450 monooxygenase ausG modifies austinolide to austinol. Austinol is further acetylated to austin by the O-acetyltransferase ausP, which spontaneously changes to dehydroaustin. The cytochrome P450 monooxygenase ausR then converts dehydroaustin is into 7-dehydrodehydroaustin. The hydroxylation catalyzed by ausR permits the O-acetyltransferase ausQ to add an additional acetyl group to the molecule, leading to the formation of acetoxydehydroaustin. The short chain dehydrogenase ausT catalyzes the reduction of the double bond present between carbon atoms 1 and 2 to convert 7-dehydrodehydroaustin into 1,2-dihydro-7-hydroxydehydroaustin. AusQ catalyzes not only an acetylation reaction but also the addition of the PKS ausV diketide product to 1,2-dihydro-7-hydroxydehydroaustin, forming precalidodehydroaustin. Finally, the iron/alpha-ketoglutarate-dependent dioxygenase converts precalidodehydroaustin into calidodehydroaustin. This Aspergillus calidoustus protein is FAD-binding monooxygenase ausC.